A 475-amino-acid polypeptide reads, in one-letter code: tRNA modification GTPase MnmE (475 aa).

Residues Arg-24, Glu-81, and Lys-124 each contribute to the (6S)-5-formyl-5,6,7,8-tetrahydrofolate site. The TrmE-type G domain occupies 220–397; sequence GLSVVLAGQP…MRSELLRLIG (178 aa). Asn-230 lines the K(+) pocket. GTP is bound by residues 230-235, 249-255, 274-277, and 378-380; these read NVGKSS, TPIAGTT, DTAG, and SAR. Ser-234 lines the Mg(2+) pocket. Residues Thr-249, Ile-251, and Thr-254 each coordinate K(+). Thr-255 is a binding site for Mg(2+). Lys-475 lines the (6S)-5-formyl-5,6,7,8-tetrahydrofolate pocket.

Belongs to the TRAFAC class TrmE-Era-EngA-EngB-Septin-like GTPase superfamily. TrmE GTPase family. Homodimer. Heterotetramer of two MnmE and two MnmG subunits. K(+) is required as a cofactor.

It is found in the cytoplasm. Its function is as follows. Exhibits a very high intrinsic GTPase hydrolysis rate. Involved in the addition of a carboxymethylaminomethyl (cmnm) group at the wobble position (U34) of certain tRNAs, forming tRNA-cmnm(5)s(2)U34. In Cupriavidus metallidurans (strain ATCC 43123 / DSM 2839 / NBRC 102507 / CH34) (Ralstonia metallidurans), this protein is tRNA modification GTPase MnmE.